The following is a 466-amino-acid chain: Ribulose bisphosphate carboxylase large chain (466 aa).

Residue Lys5 is modified to N6,N6,N6-trimethyllysine. Substrate-binding residues include Asn114 and Thr164. Lys166 serves as the catalytic Proton acceptor. Lys168 is a substrate binding site. Positions 192, 194, and 195 each coordinate Mg(2+). N6-carboxylysine is present on Lys192. The Proton acceptor role is filled by His285. Positions 286, 318, and 370 each coordinate substrate.

It belongs to the RuBisCO large chain family. Type I subfamily. As to quaternary structure, heterohexadecamer of 8 large chains and 8 small chains; disulfide-linked. The disulfide link is formed within the large subunit homodimers. Mg(2+) is required as a cofactor. In terms of processing, the disulfide bond which can form in the large chain dimeric partners within the hexadecamer appears to be associated with oxidative stress and protein turnover.

It localises to the plastid. The protein localises to the chloroplast. The enzyme catalyses 2 (2R)-3-phosphoglycerate + 2 H(+) = D-ribulose 1,5-bisphosphate + CO2 + H2O. It catalyses the reaction D-ribulose 1,5-bisphosphate + O2 = 2-phosphoglycolate + (2R)-3-phosphoglycerate + 2 H(+). In terms of biological role, ruBisCO catalyzes two reactions: the carboxylation of D-ribulose 1,5-bisphosphate, the primary event in carbon dioxide fixation, as well as the oxidative fragmentation of the pentose substrate in the photorespiration process. Both reactions occur simultaneously and in competition at the same active site. In Adoxa moschatellina (Moschatel), this protein is Ribulose bisphosphate carboxylase large chain.